A 367-amino-acid polypeptide reads, in one-letter code: uncharacterized protein (367 aa).

It belongs to the mimivirus L17x/L18x family.

This is an uncharacterized protein from Acanthamoeba polyphaga (Amoeba).